The sequence spans 61 residues: MAKKSLIVKQKKHPKFKVRAYTRCERCGRPRAVIRKFGICRLCFRDLAYKGAIPGVKKASW.

Cys24, Cys27, Cys40, and Cys43 together coordinate Zn(2+).

The protein belongs to the universal ribosomal protein uS14 family. Zinc-binding uS14 subfamily. As to quaternary structure, part of the 30S ribosomal subunit. Contacts proteins S3 and S10. Requires Zn(2+) as cofactor.

In terms of biological role, binds 16S rRNA, required for the assembly of 30S particles and may also be responsible for determining the conformation of the 16S rRNA at the A site. The polypeptide is Small ribosomal subunit protein uS14 (Malacoplasma penetrans (strain HF-2) (Mycoplasma penetrans)).